A 199-amino-acid chain; its full sequence is Imidazoleglycerol-phosphate dehydratase (199 aa).

The protein belongs to the imidazoleglycerol-phosphate dehydratase family.

The protein resides in the cytoplasm. It carries out the reaction D-erythro-1-(imidazol-4-yl)glycerol 3-phosphate = 3-(imidazol-4-yl)-2-oxopropyl phosphate + H2O. It participates in amino-acid biosynthesis; L-histidine biosynthesis; L-histidine from 5-phospho-alpha-D-ribose 1-diphosphate: step 6/9. This is Imidazoleglycerol-phosphate dehydratase from Kineococcus radiotolerans (strain ATCC BAA-149 / DSM 14245 / SRS30216).